Reading from the N-terminus, the 126-residue chain is Large ribosomal subunit protein bL20c (126 aa).

This sequence belongs to the bacterial ribosomal protein bL20 family.

It localises to the plastid. It is found in the chloroplast. Functionally, binds directly to 23S ribosomal RNA and is necessary for the in vitro assembly process of the 50S ribosomal subunit. It is not involved in the protein synthesizing functions of that subunit. The polypeptide is Large ribosomal subunit protein bL20c (Pelargonium hortorum (Common geranium)).